The chain runs to 71 residues: Translation initiation factor IF-1 (71 aa).

An S1-like domain is found at 1 to 71; it reads MAKQSAIEQD…LSKARITYRY (71 aa).

Belongs to the IF-1 family. In terms of assembly, component of the 30S ribosomal translation pre-initiation complex which assembles on the 30S ribosome in the order IF-2 and IF-3, IF-1 and N-formylmethionyl-tRNA(fMet); mRNA recruitment can occur at any time during PIC assembly.

The protein localises to the cytoplasm. In terms of biological role, one of the essential components for the initiation of protein synthesis. Stabilizes the binding of IF-2 and IF-3 on the 30S subunit to which N-formylmethionyl-tRNA(fMet) subsequently binds. Helps modulate mRNA selection, yielding the 30S pre-initiation complex (PIC). Upon addition of the 50S ribosomal subunit IF-1, IF-2 and IF-3 are released leaving the mature 70S translation initiation complex. This Flavobacterium johnsoniae (strain ATCC 17061 / DSM 2064 / JCM 8514 / BCRC 14874 / CCUG 350202 / NBRC 14942 / NCIMB 11054 / UW101) (Cytophaga johnsonae) protein is Translation initiation factor IF-1.